Reading from the N-terminus, the 376-residue chain is Salivary hyaluronidase (376 aa).

The signal sequence occupies residues 1 to 16 (MNWIFHLFCAVYGIFC). Intrachain disulfides connect Cys32-Cys328 and Cys203-Cys217. N-linked (GlcNAc...) asparagine glycosylation is found at Asn36, Asn55, Asn77, and Asn88. Glu118 functions as the Proton donor in the catalytic mechanism. N-linked (GlcNAc...) asparagine glycans are attached at residues Asn143, Asn153, Asn181, Asn214, Asn226, Asn248, Asn287, Asn321, Asn336, Asn356, and Asn371.

This sequence belongs to the glycosyl hydrolase 56 family. In terms of processing, glycosylated; glycosylation is critical for enzymatic activity. Female salivary gland (at protein level).

Its subcellular location is the secreted. The enzyme catalyses Random hydrolysis of (1-&gt;4)-linkages between N-acetyl-beta-D-glucosamine and D-glucuronate residues in hyaluronate.. Its function is as follows. Hydrolyzes high molecular weight hyaluronic acid to produce small oligosaccharides. Up-regulates expression of CSF2, CSF3, LIF, CXCL1, CXCL2 and CXCL8 in cultured human dermal microvascular endothelial cells. Promotes host neutrophil recruitment at the injection site. Functionally, (Microbial infection) Probably promotes Leishmania major infection in the host. This Lutzomyia longipalpis (Sand fly) protein is Salivary hyaluronidase.